The chain runs to 865 residues: Armadillo repeat-containing protein 2 (865 aa).

2 disordered regions span residues 39–75 (TVRT…FSVH) and 214–243 (SVPF…DQSR). Residues 60–75 (SSRTPENRPPSSFSVH) are compositionally biased toward polar residues. ARM repeat units follow at residues 261-300 (IEVD…HALE), 303-343 (NMLG…ALKV), 362-402 (EKND…TIKF), 407-448 (PEFL…HLLV), 461-502 (PLAR…KLTS), 505-546 (DCCV…NLTA), 550-587 (QARE…GEGD), 589-614 (RPEA…NLAI), 617-660 (GVGP…NLSY), 662-703 (KVKN…NLSQ), 705-744 (HDIC…NLTV), and 746-788 (RDKR…NFSE).

Functionally, required for sperm flagellum axoneme organization and function. Involved in axonemal central pair complex assembly and/or stability. The protein is Armadillo repeat-containing protein 2 of Bos taurus (Bovine).